Here is an 88-residue protein sequence, read N- to C-terminus: Acyl-CoA-binding domain-containing protein 7 (88 aa).

The ACB domain occupies 3–88 (LQADFDRAAE…AKELIEKYGI (86 aa)). Residues arginine 15, 30–34 (YGLYK), lysine 56, and tyrosine 75 contribute to the an acyl-CoA site.

This sequence belongs to the ACBD7 family.

Its function is as follows. Binds medium- and long-chain acyl-CoA esters. This chain is Acyl-CoA-binding domain-containing protein 7 (ACBD7), found in Homo sapiens (Human).